We begin with the raw amino-acid sequence, 544 residues long: Secreted aspartic protease 9 (544 aa).

The signal sequence occupies residues methionine 1–alanine 17. A disordered region spans residues glycine 31–arginine 50. One can recognise a Peptidase A1 domain in the interval tyrosine 65–alanine 479. Pepstatin A is bound at residue aspartate 83 to glycine 85. Cysteine 98 and cysteine 195 are disulfide-bonded. Threonine 167 is a catalytic residue. 3 N-linked (GlcNAc...) asparagine glycosylation sites follow: asparagine 212, asparagine 240, and asparagine 252. Residue aspartate 371 is part of the active site. Aspartate 371–threonine 375 lines the pepstatin A pocket. Cysteine 406 and cysteine 441 are joined by a disulfide. 2 N-linked (GlcNAc...) asparagine glycosylation sites follow: asparagine 422 and asparagine 499. Residues serine 500–serine 520 form a disordered region.

This sequence belongs to the peptidase A1 family. As to quaternary structure, monomer. The GPI-anchor is attached to the protein in the endoplasmic reticulum and serves to target the protein to the cell surface. There, the glucosamine-inositol phospholipid moiety is cleaved off and the GPI-modified mannoprotein is covalently attached via its lipidless GPI glycan remnant to the 1,6-beta-glucan of the outer cell wall layer.

Its subcellular location is the cell membrane. It is found in the secreted. The protein resides in the cell wall. The enzyme catalyses Preferential cleavage at the carboxyl of hydrophobic amino acids, but fails to cleave 15-Leu-|-Tyr-16, 16-Tyr-|-Leu-17 and 24-Phe-|-Phe-25 of insulin B chain. Activates trypsinogen, and degrades keratin.. Functionally, secreted aspartic peptidases (SAPs) are a group of ten acidic hydrolases considered as key virulence factors. These enzymes supply the fungus with nutrient amino acids as well as are able to degrade the selected host's proteins involved in the immune defense. Moreover, acts toward human hemoglobin though limited proteolysis to generate a variety of antimicrobial hemocidins, enabling to compete with the other microorganisms of the same physiological niche using the microbicidal peptides generated from the host protein. Plays a key role in defense against host by cleaving histatin-5 (Hst 5), a peptide from human saliva that carries out fungicidal activity. The cleavage rate decreases in an order of SAP2 &gt; SAP9 &gt; SAP3 &gt; SAP7 &gt; SAP4 &gt; SAP1 &gt; SAP8. The first cleavage occurs between residues 'Lys-17' and 'His-18' of Hst 5, giving DSHAKRHHGYKRKFHEK and HHSHRGY peptides. Simultaneously, the DSHAKRHHGYKRK peptide is also formed. Further fragmentation by SAP9 results in FHEK product. The protein is Secreted aspartic protease 9 of Candida albicans (Yeast).